The following is a 399-amino-acid chain: Lipoyl synthase, mitochondrial (399 aa).

The N-terminal 14 residues, 1-14 (MALISRSCGAASRY), are a transit peptide targeting the mitochondrion. Low complexity predominate over residues 39 to 52 (AASTSSSSSPSPST). The tract at residues 39 to 60 (AASTSSSSSPSPSTHNDRKKDL) is disordered. 7 residues coordinate [4Fe-4S] cluster: cysteine 128, cysteine 133, cysteine 139, cysteine 159, cysteine 163, cysteine 166, and serine 374. One can recognise a Radical SAM core domain in the interval 144–363 (EYATATATIM…EKVGQEMGFI (220 aa)).

Belongs to the radical SAM superfamily. Lipoyl synthase family. The cofactor is [4Fe-4S] cluster.

The protein resides in the mitochondrion. It catalyses the reaction [[Fe-S] cluster scaffold protein carrying a second [4Fe-4S](2+) cluster] + N(6)-octanoyl-L-lysyl-[protein] + 2 oxidized [2Fe-2S]-[ferredoxin] + 2 S-adenosyl-L-methionine + 4 H(+) = [[Fe-S] cluster scaffold protein] + N(6)-[(R)-dihydrolipoyl]-L-lysyl-[protein] + 4 Fe(3+) + 2 hydrogen sulfide + 2 5'-deoxyadenosine + 2 L-methionine + 2 reduced [2Fe-2S]-[ferredoxin]. Its pathway is protein modification; protein lipoylation via endogenous pathway; protein N(6)-(lipoyl)lysine from octanoyl-[acyl-carrier-protein]: step 2/2. Functionally, catalyzes the radical-mediated insertion of two sulfur atoms into the C-6 and C-8 positions of the octanoyl moiety bound to the lipoyl domains of lipoate-dependent enzymes, thereby converting the octanoylated domains into lipoylated derivatives. In Danio rerio (Zebrafish), this protein is Lipoyl synthase, mitochondrial (lias).